The following is a 173-amino-acid chain: Peptide deformylase (173 aa).

Fe cation contacts are provided by cysteine 98 and histidine 140. The active site involves glutamate 141. Histidine 144 is a binding site for Fe cation.

This sequence belongs to the polypeptide deformylase family. The cofactor is Fe(2+).

The enzyme catalyses N-terminal N-formyl-L-methionyl-[peptide] + H2O = N-terminal L-methionyl-[peptide] + formate. Removes the formyl group from the N-terminal Met of newly synthesized proteins. Requires at least a dipeptide for an efficient rate of reaction. N-terminal L-methionine is a prerequisite for activity but the enzyme has broad specificity at other positions. This chain is Peptide deformylase, found in Caulobacter vibrioides (strain ATCC 19089 / CIP 103742 / CB 15) (Caulobacter crescentus).